The following is a 614-amino-acid chain: Sulfite reductase [NADPH] flavoprotein alpha-component (614 aa).

Residues 79–217 (LTIIFASQTG…AATEWRKQVL (139 aa)) enclose the Flavodoxin-like domain. FMN is bound by residues 85-90 (SQTGNA), 132-135 (STNG), and 168-177 (LGDSSYQFFC). In terms of domain architecture, FAD-binding FR-type spans 249–463 (EQPYTASLST…VEHNNNFKLP (215 aa)). FAD contacts are provided by residues Thr-337, Thr-371, 401–404 (RLYS), 419–421 (TVG), Tyr-425, and 434–437 (GGAS). NADP(+) is bound by residues 534-535 (SR), 540-544 (KVYVQ), and Asp-576. Tyr-614 contributes to the FAD binding site.

The protein belongs to the NADPH-dependent sulphite reductase flavoprotein subunit CysJ family. In the N-terminal section; belongs to the flavodoxin family. It in the C-terminal section; belongs to the flavoprotein pyridine nucleotide cytochrome reductase family. As to quaternary structure, alpha(8)-beta(8). The alpha component is a flavoprotein, the beta component is a hemoprotein. The cofactor is FAD. Requires FMN as cofactor.

The catalysed reaction is hydrogen sulfide + 3 NADP(+) + 3 H2O = sulfite + 3 NADPH + 4 H(+). It functions in the pathway sulfur metabolism; hydrogen sulfide biosynthesis; hydrogen sulfide from sulfite (NADPH route): step 1/1. Its function is as follows. Component of the sulfite reductase complex that catalyzes the 6-electron reduction of sulfite to sulfide. This is one of several activities required for the biosynthesis of L-cysteine from sulfate. The flavoprotein component catalyzes the electron flow from NADPH -&gt; FAD -&gt; FMN to the hemoprotein component. This chain is Sulfite reductase [NADPH] flavoprotein alpha-component, found in Vibrio cholerae serotype O1 (strain ATCC 39541 / Classical Ogawa 395 / O395).